Reading from the N-terminus, the 442-residue chain is tRNA-2-methylthio-N(6)-dimethylallyladenosine synthase (442 aa).

In terms of domain architecture, MTTase N-terminal spans 3-120; the sequence is KKLYIETHGC…LPEMIDAARI (118 aa). Cysteine 12, cysteine 49, cysteine 83, cysteine 157, cysteine 161, and cysteine 164 together coordinate [4Fe-4S] cluster. The Radical SAM core domain maps to 143-375; that stretch reads RIDGPSAYVS…QHRLNQQGFE (233 aa). The TRAM domain occupies 378–442; that stretch reads RQMVGSVQRI…PHSLRGSLIQ (65 aa).

It belongs to the methylthiotransferase family. MiaB subfamily. Monomer. [4Fe-4S] cluster is required as a cofactor.

It is found in the cytoplasm. The enzyme catalyses N(6)-dimethylallyladenosine(37) in tRNA + (sulfur carrier)-SH + AH2 + 2 S-adenosyl-L-methionine = 2-methylsulfanyl-N(6)-dimethylallyladenosine(37) in tRNA + (sulfur carrier)-H + 5'-deoxyadenosine + L-methionine + A + S-adenosyl-L-homocysteine + 2 H(+). Functionally, catalyzes the methylthiolation of N6-(dimethylallyl)adenosine (i(6)A), leading to the formation of 2-methylthio-N6-(dimethylallyl)adenosine (ms(2)i(6)A) at position 37 in tRNAs that read codons beginning with uridine. The sequence is that of tRNA-2-methylthio-N(6)-dimethylallyladenosine synthase from Pseudomonas fluorescens (strain Pf0-1).